The primary structure comprises 333 residues: Acetoin:2,6-dichlorophenolindophenol oxidoreductase subunit alpha (333 aa).

In terms of assembly, tetramer of 2 alpha and 2 beta subunits. The cofactor is thiamine diphosphate.

Its pathway is ketone degradation; acetoin degradation. Its function is as follows. Catalyzes the 2,6-dichlorophenolindophenol-dependent cleavage of acetoin into acetate and acetaldehyde, in vitro. The alpha subunit is probably the catalytic subunit of the enzyme. The protein is Acetoin:2,6-dichlorophenolindophenol oxidoreductase subunit alpha (acoA) of Cupriavidus necator (strain ATCC 17699 / DSM 428 / KCTC 22496 / NCIMB 10442 / H16 / Stanier 337) (Ralstonia eutropha).